A 363-amino-acid polypeptide reads, in one-letter code: Chalcone synthase B (363 aa).

Residue cysteine 170 is part of the active site.

The protein belongs to the thiolase-like superfamily. Chalcone/stilbene synthases family.

The enzyme catalyses (E)-4-coumaroyl-CoA + 3 malonyl-CoA + 3 H(+) = 2',4,4',6'-tetrahydroxychalcone + 3 CO2 + 4 CoA. It participates in secondary metabolite biosynthesis; flavonoid biosynthesis. The primary product of this enzyme is 4,2',4',6'-tetrahydroxychalcone (also termed naringenin-chalcone or chalcone) which can under specific conditions spontaneously isomerize into naringenin. The polypeptide is Chalcone synthase B (CHSB) (Ipomoea cordatotriloba (Tievine)).